The chain runs to 199 residues: Large ribosomal subunit protein bL25 (199 aa).

This sequence belongs to the bacterial ribosomal protein bL25 family. CTC subfamily. As to quaternary structure, part of the 50S ribosomal subunit; part of the 5S rRNA/L5/L18/L25 subcomplex. Contacts the 5S rRNA. Binds to the 5S rRNA independently of L5 and L18.

This is one of the proteins that binds to the 5S RNA in the ribosome where it forms part of the central protuberance. The protein is Large ribosomal subunit protein bL25 of Nostoc punctiforme (strain ATCC 29133 / PCC 73102).